We begin with the raw amino-acid sequence, 59 residues long: MKKTAKHFCPHCQKEVSWQDNPHRPFCSERCKMIDLGSWFSENYKIPGEKKPSEDEDDN.

Cys-9, Cys-12, Cys-27, and Cys-31 together coordinate Zn(2+).

This sequence belongs to the DNA gyrase inhibitor YacG family. Interacts with GyrB. It depends on Zn(2+) as a cofactor.

In terms of biological role, inhibits all the catalytic activities of DNA gyrase by preventing its interaction with DNA. Acts by binding directly to the C-terminal domain of GyrB, which probably disrupts DNA binding by the gyrase. The chain is DNA gyrase inhibitor YacG from Geotalea daltonii (strain DSM 22248 / JCM 15807 / FRC-32) (Geobacter daltonii).